The following is a 367-amino-acid chain: 3-dehydroquinate synthase (367 aa).

NAD(+)-binding positions include 69-74 (DGEAFK), 103-107 (GVIGD), 127-128 (TT), lysine 140, and lysine 149. Zn(2+)-binding residues include glutamate 182, histidine 245, and histidine 262.

Belongs to the sugar phosphate cyclases superfamily. Dehydroquinate synthase family. It depends on Co(2+) as a cofactor. Zn(2+) is required as a cofactor. The cofactor is NAD(+).

It localises to the cytoplasm. The catalysed reaction is 7-phospho-2-dehydro-3-deoxy-D-arabino-heptonate = 3-dehydroquinate + phosphate. It participates in metabolic intermediate biosynthesis; chorismate biosynthesis; chorismate from D-erythrose 4-phosphate and phosphoenolpyruvate: step 2/7. Catalyzes the conversion of 3-deoxy-D-arabino-heptulosonate 7-phosphate (DAHP) to dehydroquinate (DHQ). The chain is 3-dehydroquinate synthase from Pseudomonas savastanoi pv. phaseolicola (strain 1448A / Race 6) (Pseudomonas syringae pv. phaseolicola (strain 1448A / Race 6)).